The chain runs to 244 residues: Rho-related GTP-binding protein RhoE (244 aa).

30–37 lines the GTP pocket; the sequence is GDSQCGRT. The Effector region motif lies at 52–60; that stretch reads YVPTVFENY. Residues 77–81 and 135–138 each bind GTP; these read DTSGS and CKSD. A Cysteine methyl ester modification is found at C241. C241 carries S-farnesyl cysteine lipidation. Positions 242-244 are cleaved as a propeptide — removed in mature form; the sequence is TVM.

This sequence belongs to the small GTPase superfamily. Rho family. As to quaternary structure, binds ROCK1. Interacts with UBXD5.

It is found in the cell membrane. Binds GTP but lacks intrinsic GTPase activity and is resistant to Rho-specific GTPase-activating proteins. The sequence is that of Rho-related GTP-binding protein RhoE (RND3) from Sus scrofa (Pig).